The chain runs to 309 residues: Ribonuclease Z (309 aa).

Zn(2+)-binding residues include His63, His65, Asp67, His68, His145, Asp216, and His274. Catalysis depends on Asp67, which acts as the Proton acceptor.

The protein belongs to the RNase Z family. Homodimer. Zn(2+) is required as a cofactor.

It catalyses the reaction Endonucleolytic cleavage of RNA, removing extra 3' nucleotides from tRNA precursor, generating 3' termini of tRNAs. A 3'-hydroxy group is left at the tRNA terminus and a 5'-phosphoryl group is left at the trailer molecule.. Functionally, zinc phosphodiesterase, which displays some tRNA 3'-processing endonuclease activity. Probably involved in tRNA maturation, by removing a 3'-trailer from precursor tRNA. The protein is Ribonuclease Z of Streptococcus pyogenes serotype M6 (strain ATCC BAA-946 / MGAS10394).